Here is a 1076-residue protein sequence, read N- to C-terminus: Bifunctional glutamine synthetase adenylyltransferase/adenylyl-removing enzyme (1076 aa).

Residues 1–521 form an adenylyl removase region; the sequence is MESSIFKPSS…LHLDIYYRPM (521 aa). Residues 524 to 1076 form an adenylyl transferase region; the sequence is VNAQMENDQI…LERNRRRAQR (553 aa). The segment covering 1042–1056 has biased composition (low complexity); the sequence is TATASAATQQPQTAP. Residues 1042 to 1076 form a disordered region; that stretch reads TATASAATQQPQTAPRPRMHVIAPRLERNRRRAQR.

This sequence belongs to the GlnE family. It depends on Mg(2+) as a cofactor.

The catalysed reaction is [glutamine synthetase]-O(4)-(5'-adenylyl)-L-tyrosine + phosphate = [glutamine synthetase]-L-tyrosine + ADP. It carries out the reaction [glutamine synthetase]-L-tyrosine + ATP = [glutamine synthetase]-O(4)-(5'-adenylyl)-L-tyrosine + diphosphate. Involved in the regulation of glutamine synthetase GlnA, a key enzyme in the process to assimilate ammonia. When cellular nitrogen levels are high, the C-terminal adenylyl transferase (AT) inactivates GlnA by covalent transfer of an adenylyl group from ATP to specific tyrosine residue of GlnA, thus reducing its activity. Conversely, when nitrogen levels are low, the N-terminal adenylyl removase (AR) activates GlnA by removing the adenylyl group by phosphorolysis, increasing its activity. The regulatory region of GlnE binds the signal transduction protein PII (GlnB) which indicates the nitrogen status of the cell. The chain is Bifunctional glutamine synthetase adenylyltransferase/adenylyl-removing enzyme from Bifidobacterium longum (strain DJO10A).